Here is a 351-residue protein sequence, read N- to C-terminus: Methylthioribose-1-phosphate isomerase (351 aa).

Substrate-binding positions include 53 to 55 (RGA), R96, and Q205. D246 serves as the catalytic Proton donor. Position 256-257 (256-257 (NK)) interacts with substrate.

This sequence belongs to the eIF-2B alpha/beta/delta subunits family. MtnA subfamily.

It catalyses the reaction 5-(methylsulfanyl)-alpha-D-ribose 1-phosphate = 5-(methylsulfanyl)-D-ribulose 1-phosphate. It functions in the pathway amino-acid biosynthesis; L-methionine biosynthesis via salvage pathway; L-methionine from S-methyl-5-thio-alpha-D-ribose 1-phosphate: step 1/6. Functionally, catalyzes the interconversion of methylthioribose-1-phosphate (MTR-1-P) into methylthioribulose-1-phosphate (MTRu-1-P). This chain is Methylthioribose-1-phosphate isomerase, found in Synechocystis sp. (strain ATCC 27184 / PCC 6803 / Kazusa).